The primary structure comprises 253 residues: uncharacterized protein (253 aa).

10-34 is an NADP(+) binding site; that stretch reads LVTGASSGLGRGLALWLARRGVRVF. Residue S142 participates in substrate binding. The active-site Proton acceptor is Y155.

It belongs to the short-chain dehydrogenases/reductases (SDR) family.

This is an uncharacterized protein from Myxococcus xanthus (strain DK1622).